A 190-amino-acid chain; its full sequence is Protein GrpE (190 aa).

A compositionally biased stretch (polar residues) spans 1–11 (MSNQDEPQNSP). A disordered region spans residues 1-36 (MSNQDEPQNSPEEFAEDQQADVALEEASSDSSETAA). Residues 13 to 28 (EFAEDQQADVALEEAS) show a composition bias toward acidic residues.

It belongs to the GrpE family. As to quaternary structure, homodimer.

It is found in the cytoplasm. Participates actively in the response to hyperosmotic and heat shock by preventing the aggregation of stress-denatured proteins, in association with DnaK and GrpE. It is the nucleotide exchange factor for DnaK and may function as a thermosensor. Unfolded proteins bind initially to DnaJ; upon interaction with the DnaJ-bound protein, DnaK hydrolyzes its bound ATP, resulting in the formation of a stable complex. GrpE releases ADP from DnaK; ATP binding to DnaK triggers the release of the substrate protein, thus completing the reaction cycle. Several rounds of ATP-dependent interactions between DnaJ, DnaK and GrpE are required for fully efficient folding. The sequence is that of Protein GrpE from Teredinibacter turnerae (strain ATCC 39867 / T7901).